The chain runs to 440 residues: Xylose isomerase (440 aa).

Active-site residues include H100 and D103. E231, E267, H270, D295, D306, D308, and D338 together coordinate Mg(2+).

Belongs to the xylose isomerase family. In terms of assembly, homotetramer. The cofactor is Mg(2+).

Its subcellular location is the cytoplasm. It catalyses the reaction alpha-D-xylose = alpha-D-xylulofuranose. In Burkholderia vietnamiensis (strain G4 / LMG 22486) (Burkholderia cepacia (strain R1808)), this protein is Xylose isomerase.